We begin with the raw amino-acid sequence, 156 residues long: 6,7-dimethyl-8-ribityllumazine synthase (156 aa).

5-amino-6-(D-ribitylamino)uracil contacts are provided by residues phenylalanine 23, 57–59 (AYE), and 81–83 (AII). (2S)-2-hydroxy-3-oxobutyl phosphate is bound at residue 86-87 (GT). Histidine 89 functions as the Proton donor in the catalytic mechanism. Phenylalanine 114 is a binding site for 5-amino-6-(D-ribitylamino)uracil. Arginine 128 is a binding site for (2S)-2-hydroxy-3-oxobutyl phosphate.

Belongs to the DMRL synthase family.

It catalyses the reaction (2S)-2-hydroxy-3-oxobutyl phosphate + 5-amino-6-(D-ribitylamino)uracil = 6,7-dimethyl-8-(1-D-ribityl)lumazine + phosphate + 2 H2O + H(+). Its pathway is cofactor biosynthesis; riboflavin biosynthesis; riboflavin from 2-hydroxy-3-oxobutyl phosphate and 5-amino-6-(D-ribitylamino)uracil: step 1/2. Its function is as follows. Catalyzes the formation of 6,7-dimethyl-8-ribityllumazine by condensation of 5-amino-6-(D-ribitylamino)uracil with 3,4-dihydroxy-2-butanone 4-phosphate. This is the penultimate step in the biosynthesis of riboflavin. The protein is 6,7-dimethyl-8-ribityllumazine synthase of Helicobacter pylori (strain Shi470).